Here is a 165-residue protein sequence, read N- to C-terminus: Large ribosomal subunit protein uL11 (165 aa).

Residue arginine 67 is modified to N5-methylarginine.

Belongs to the universal ribosomal protein uL11 family. Component of the large ribosomal subunit (LSU). Mature N.crassa ribosomes consist of a small (40S) and a large (60S) subunit. The 40S small subunit contains 1 molecule of ribosomal RNA (18S rRNA) and at least 32 different proteins. The large 60S subunit contains 3 rRNA molecules (26S, 5.8S and 5S rRNA) and at least 42 different proteins.

Its subcellular location is the cytoplasm. Its function is as follows. Component of the ribosome, a large ribonucleoprotein complex responsible for the synthesis of proteins in the cell. The small ribosomal subunit (SSU) binds messenger RNAs (mRNAs) and translates the encoded message by selecting cognate aminoacyl-transfer RNA (tRNA) molecules. The large subunit (LSU) contains the ribosomal catalytic site termed the peptidyl transferase center (PTC), which catalyzes the formation of peptide bonds, thereby polymerizing the amino acids delivered by tRNAs into a polypeptide chain. The nascent polypeptides leave the ribosome through a tunnel in the LSU and interact with protein factors that function in enzymatic processing, targeting, and the membrane insertion of nascent chains at the exit of the ribosomal tunnel. In Neurospora crassa (strain ATCC 24698 / 74-OR23-1A / CBS 708.71 / DSM 1257 / FGSC 987), this protein is Large ribosomal subunit protein uL11 (rpl-12).